We begin with the raw amino-acid sequence, 215 residues long: Small ribosomal subunit protein uS7 (215 aa).

The protein belongs to the universal ribosomal protein uS7 family. Part of the 30S ribosomal subunit.

Functionally, one of the primary rRNA binding proteins, it binds directly to 16S rRNA where it nucleates assembly of the head domain of the 30S subunit. Is located at the subunit interface close to the decoding center. In Thermococcus celer, this protein is Small ribosomal subunit protein uS7.